The chain runs to 201 residues: MSKHIAGPEIERLIQLLARIPGFGPRSARRAALYLIKKKETLLEPLGAAIQAAVDKVCICSVCGNVDTTDPCSICRDPRRDDTTIIVVEDVADLWALERARTLAARYHVLGGRLSPLDGIGPDELNITSLVQRVVQNPIMEIILAVNATVEGQTTAHYITDQLSNFSVKITRLAHGVPVGGELDYLDDGTLAAALQARTNL.

The C4-type zinc-finger motif lies at 60-75 (CSVCGNVDTTDPCSIC). In terms of domain architecture, Toprim spans 83 to 178 (TTIIVVEDVA…KITRLAHGVP (96 aa)).

The protein belongs to the RecR family.

In terms of biological role, may play a role in DNA repair. It seems to be involved in an RecBC-independent recombinational process of DNA repair. It may act with RecF and RecO. The polypeptide is Recombination protein RecR (Bartonella quintana (strain Toulouse) (Rochalimaea quintana)).